The sequence spans 151 residues: Ribonuclease H (151 aa).

The region spanning M1–E141 is the RNase H type-1 domain. Mg(2+) contacts are provided by D9, E47, D69, and D133.

It belongs to the RNase H family. In terms of assembly, monomer. Mg(2+) serves as cofactor.

The protein localises to the cytoplasm. It catalyses the reaction Endonucleolytic cleavage to 5'-phosphomonoester.. In terms of biological role, endonuclease that specifically degrades the RNA of RNA-DNA hybrids. The protein is Ribonuclease H of Rhizobium johnstonii (strain DSM 114642 / LMG 32736 / 3841) (Rhizobium leguminosarum bv. viciae).